We begin with the raw amino-acid sequence, 837 residues long: ABC transporter A family member 8 (837 aa).

7 consecutive transmembrane segments (helical) span residues 29–49, 244–264, 303–323, 326–346, 356–376, 393–413, and 455–475; these read YFST…FYII, VVSL…FIFL, LIIC…FFLG, FLVL…MAFF, VAIG…LTFN, GAAF…SKVL, and LAYM…IEYA. The region spanning 516–750 is the ABC transporter domain; the sequence is IRGLSKTFNK…YGEGYSVQVI (235 aa). 553–560 contacts ATP; that stretch reads GSNGAGKS.

Belongs to the ABC transporter superfamily. ABCA family.

Its subcellular location is the membrane. The polypeptide is ABC transporter A family member 8 (abcA8) (Dictyostelium discoideum (Social amoeba)).